Consider the following 1040-residue polypeptide: Nucleotide-binding oligomerization domain-containing protein 2 (1040 aa).

CARD domains are found at residues 26-122 and 126-218; these read CEMC…LHGC and HSLH…EAAT. The ATG16L1-binding motif motif lies at 63–77; that stretch reads WEVLSWEDYEGFHLL. Positions 239, 252, 253, 302, 303, 304, 305, 306, and 307 each coordinate ADP. The required for CARD9 binding stretch occupies residues 241-274; the sequence is DGAETLCLEDIYTENVLEVWADVGMAGPPQKSPA. Residues 293-618 enclose the NACHT domain; it reads DTVLVVGEAG…FFAAFYLALS (326 aa). 299–306 serves as a coordination point for ATP; that stretch reads GEAGSGKS. The S-palmitoyl cysteine moiety is linked to residue Cys-395. ADP is bound at residue His-603. 9 LRR repeats span residues 791–812, 816–839, 844–865, 872–884, 900–920, 928–949, 956–976, 984–1005, and 1012–1032; these read RPVALQLDYNSVGDIGVEQLLP, VCKALYLRDNNISDRGICKLIECA, QLQKLALFNNKLTDGCAHSMAK, NFLALRLGNNYIT, SLQFLGFWGNRVGDEGAQALA, SLRWLSLVGNNIGSVGAQALAL, MLEELCLEENHLQDEGVCSLA, SLKILKLSNNCITYLGAEALLQ, and TILEVWLRGNTFSLEEVDKLG. Cys-1033 is lipidated: S-palmitoyl cysteine.

It belongs to the NOD1-NOD2 family. Homooligomer: homooligomerizes following muramyl dipeptide (MDP)-binding, promoting RIPK2 recruitment. Interacts (via CARD domain) with RIPK2 (via CARD domain). Following RIPK2 recruitment, RIPK2 homooligomerizes via its CARD domain and forms long filaments named RIPosomes. Interacts (via CARD domain) with ubiquitin; inhibiting interaction with RIPK2. Component of a signaling complex consisting of ARHGEF2, NOD2 and RIPK2. Interacts with ANKRD17 (via N-terminus). Interacts with HSPA1A; the interaction enhances NOD2 stability. Interacts (via both CARD domains) with HSP90; the interaction enhances NOD2 stability. Interacts (via CARD domain) with SOCS3; the interaction promotes NOD2 degradation. Interacts (via CARD domain) with ERBIN; the interaction inhibits activation of NOD2. Interacts with MAPKBP1; the interaction is enhanced in the presence of muramyl dipeptide (MDP) and inhibits NOD2 homooligomerization and activation. Interacts with INAVA; the interaction takes place upon Pattern recognition receptor (PRR) stimulation. Interacts (via NACHT domain) with CARD9. Interacts (via CARD domain) with CASP1; this interaction leads to IL1B processing. Also interacts with CASP4. Interacts with NLRP1; this interaction is enhanced in the presence of muramyl dipeptide (MDP) and leads to increased IL1B release. Interacts with NLRP12; this interaction promotes degradation of NOD2 through the ubiquitin-proteasome pathway. Interacts with ANKHD1, C10orf67, CHMP5, DOCK7, ENTR1, KRT15, LDOC1, PPP1R12C, PPP2R3B, TRIM41 and VIM. Interacts with MAVS; interaction takes place following single-stranded RNA (ssRNA)-binding. Interacts with ATG16L1. Interacts with IRGM; promoting IRGM 'Lys-63'-linked polyubiquitination, which is required for interactions with the core autophagy factors. In terms of processing, palmitoylated by ZDHHC5; palmitoylation is required for proper recruitment to the bacterial entry site and hence for proper signaling upon cognate peptidoglycan detection. Palmitoylation promotes localization to the cell membrane. Palmitoylation protects from SQSTM1/p62-dependent autophagic degradation. Post-translationally, polyubiquitinated by TRIM27, leading to proteasome-mediated degradation. Polyubiquitinated and degraded following muramyl dipeptide (MDP) stimulation, conferring MDP tolerance and preventing septic shock. Degraded via selective autophagy following interaction with IRGM. IRGM promotes NOD2-RIPK2 RIPosome recruitment to autophagosome membranes, promoting their SQSTM1/p62-dependent autophagic degradation. In terms of processing, O-glycosylated by OGT, O-GlcNAcylation increases protein stability. As to expression, expressed in monocytes, macrophages, dendritic cells, hepatocytes, preadipocytes, epithelial cells of oral cavity, lung and intestine, with higher expression in ileal Paneth cells and in intestinal stem cells. Expressed at higher level in leukocytes.

It localises to the cell membrane. The protein resides in the basolateral cell membrane. The protein localises to the cytoplasm. Its subcellular location is the mitochondrion. ADP-binding promotes an inactive closed conformation. Pattern recognition receptor (PRR) that detects bacterial peptidoglycan fragments and other danger signals and plays an important role in gastrointestinal immunity. Specifically activated by muramyl dipeptide (MDP), a fragment of bacterial peptidoglycan found in every bacterial peptidoglycan type. NOD2 specifically recognizes and binds 6-O-phospho-MDP, the phosphorylated form of MDP, which is generated by NAGK. 6-O-phospho-MDP-binding triggers oligomerization that facilitates the binding and subsequent activation of the proximal adapter receptor-interacting RIPK2. Following recruitment, RIPK2 undergoes 'Met-1'- (linear) and 'Lys-63'-linked polyubiquitination by E3 ubiquitin-protein ligases XIAP, BIRC2, BIRC3 and the LUBAC complex, becoming a scaffolding protein for downstream effectors, triggering activation of the NF-kappa-B and MAP kinases signaling. This in turn leads to the transcriptional activation of hundreds of genes involved in immune response. Its ability to detect bacterial MDP plays a central role in maintaining the equilibrium between intestinal microbiota and host immune responses to control inflammation. An imbalance in this relationship results in dysbiosis, whereby pathogenic bacteria prevail on commensals, causing damage in the intestinal epithelial barrier as well as allowing bacterial invasion and inflammation. Acts as a regulator of appetite by sensing MDP in a subset of brain neurons: microbiota-derived MDP reach the brain, where they bind and activate NOD2 in inhibitory hypothalamic neurons, decreasing neuronal activity, thereby regulating satiety and body temperature. NOD2-dependent MDP-sensing of bacterial cell walls in the intestinal epithelial compartment contributes to sustained postnatal growth upon undernutrition. Also plays a role in antiviral response by acting as a sensor of single-stranded RNA (ssRNA) from viruses: upon ssRNA-binding, interacts with MAVS, leading to activation of interferon regulatory factor-3/IRF3 and expression of type I interferon. Also acts as a regulator of autophagy in dendritic cells via its interaction with ATG16L1, possibly by recruiting ATG16L1 at the site of bacterial entry. NOD2 activation in the small intestine crypt also contributes to intestinal stem cells survival and function: acts by promoting mitophagy via its association with ATG16L1. In addition to its main role in innate immunity, also regulates the adaptive immune system by acting as regulator of helper T-cell and regulatory T-cells (Tregs). Besides recognizing pathogens, also involved in the endoplasmic reticulum stress response: acts by sensing and binding to the cytosolic metabolite sphingosine-1-phosphate generated in response to endoplasmic reticulum stress, initiating an inflammation process that leads to activation of the NF-kappa-B and MAP kinases signaling. May also be involved in NLRP1 activation following activation by MDP, leading to CASP1 activation and IL1B release in macrophages. Functionally, acts as a pattern recognition receptor (PRR); able to activate NF-kappa-B. Its function is as follows. Can activate NF-kappa-B in a muramyl dipeptide (MDP)-independent manner. This Homo sapiens (Human) protein is Nucleotide-binding oligomerization domain-containing protein 2.